Consider the following 441-residue polypeptide: Baicalein 7-O-glucuronosyltransferase (441 aa).

This sequence belongs to the UDP-glycosyltransferase family. In terms of assembly, homodimer.

It catalyses the reaction baicalein + UDP-alpha-D-glucuronate = baicalin + UDP. With respect to regulation, inhibited by copper, zinc and iron, p-Chloromercuri-benzoic acid (PCMBA) and 4,4'-diisothiocyanostilbene-2,2'-disulfonic acid (DIDS), but not by N-ethylmaleimide (NEM), dithioerythritol (DTE), calcium or magnesium. Involved in the production of glucuronosylated baicalein, a flavonoid that shows antiallergic, anti-HIV and antitumor activities. Can use baicalein, scutellarein and wogonin as substrates, but not chrysin, apigenin, luteolin, quercetin, formononetin and daidzein. Highly specific for UDP-glucuronate (UDP-GlcUA) and no activity with UDP-glucose or UDP-galacturonic acid. This chain is Baicalein 7-O-glucuronosyltransferase (UBGAT-I), found in Scutellaria baicalensis (Baical skullcap).